A 366-amino-acid polypeptide reads, in one-letter code: tRNA/tmRNA (uracil-C(5))-methyltransferase (366 aa).

S-adenosyl-L-methionine contacts are provided by Gln190, Tyr218, Asn223, Glu239, and Asp299. Cys324 serves as the catalytic Nucleophile. Residue Glu358 is the Proton acceptor of the active site.

It belongs to the class I-like SAM-binding methyltransferase superfamily. RNA M5U methyltransferase family. TrmA subfamily.

The enzyme catalyses uridine(54) in tRNA + S-adenosyl-L-methionine = 5-methyluridine(54) in tRNA + S-adenosyl-L-homocysteine + H(+). It carries out the reaction uridine(341) in tmRNA + S-adenosyl-L-methionine = 5-methyluridine(341) in tmRNA + S-adenosyl-L-homocysteine + H(+). Dual-specificity methyltransferase that catalyzes the formation of 5-methyluridine at position 54 (m5U54) in all tRNAs, and that of position 341 (m5U341) in tmRNA (transfer-mRNA). The polypeptide is tRNA/tmRNA (uracil-C(5))-methyltransferase (Escherichia coli O6:H1 (strain CFT073 / ATCC 700928 / UPEC)).